Here is a 101-residue protein sequence, read N- to C-terminus: Small ribosomal subunit protein uS14A (101 aa).

The interval 32 to 71 is disordered; it reads RRPGTPEPERNRAVEELRRQPRDASATRVRNRDSVDGRPR. Basic and acidic residues-rich tracts occupy residues 38–53 and 61–70; these read EPER…RQPR and RNRDSVDGRP.

It belongs to the universal ribosomal protein uS14 family. Part of the 30S ribosomal subunit. Contacts proteins S3 and S10.

Binds 16S rRNA, required for the assembly of 30S particles and may also be responsible for determining the conformation of the 16S rRNA at the A site. The chain is Small ribosomal subunit protein uS14A from Streptomyces griseus subsp. griseus (strain JCM 4626 / CBS 651.72 / NBRC 13350 / KCC S-0626 / ISP 5235).